A 72-amino-acid polypeptide reads, in one-letter code: Translation initiation factor IF-1 (72 aa).

Positions 1–72 (MSKEDHIEME…SKARITFRHR (72 aa)) constitute an S1-like domain.

The protein belongs to the IF-1 family. In terms of assembly, component of the 30S ribosomal translation pre-initiation complex which assembles on the 30S ribosome in the order IF-2 and IF-3, IF-1 and N-formylmethionyl-tRNA(fMet); mRNA recruitment can occur at any time during PIC assembly.

The protein localises to the cytoplasm. One of the essential components for the initiation of protein synthesis. Stabilizes the binding of IF-2 and IF-3 on the 30S subunit to which N-formylmethionyl-tRNA(fMet) subsequently binds. Helps modulate mRNA selection, yielding the 30S pre-initiation complex (PIC). Upon addition of the 50S ribosomal subunit IF-1, IF-2 and IF-3 are released leaving the mature 70S translation initiation complex. The chain is Translation initiation factor IF-1 from Methylococcus capsulatus (strain ATCC 33009 / NCIMB 11132 / Bath).